A 69-amino-acid chain; its full sequence is Putative membrane protein insertion efficiency factor (69 aa).

Belongs to the UPF0161 family.

It is found in the cell membrane. Its function is as follows. Could be involved in insertion of integral membrane proteins into the membrane. This Thermoanaerobacter pseudethanolicus (strain ATCC 33223 / 39E) (Clostridium thermohydrosulfuricum) protein is Putative membrane protein insertion efficiency factor.